The following is an 84-amino-acid chain: Small ribosomal subunit protein bS16 (84 aa).

It belongs to the bacterial ribosomal protein bS16 family.

The sequence is that of Small ribosomal subunit protein bS16 from Dechloromonas aromatica (strain RCB).